Reading from the N-terminus, the 43-residue chain is uncharacterized protein (43 aa).

The first 16 residues, 1-16 (MKLLNFILIIFNALKS), serve as a signal peptide directing secretion. N-linked (GlcNAc...) asparagine; by host glycosylation is present at asparagine 37.

This is an uncharacterized protein from Acheta domesticus (House cricket).